The following is a 533-amino-acid chain: MLHPLLRHLPLALALALCAAGAAQAKNLVVCTEASPEGFDIVQYTGAVTADASAETVFNRLLAFRPGTTEVIPGLAERWDVSADGLSYTFHLRPGVKFHTTDYFKPTRSLNADDVLWTFQRALDPKHPWHASALRGYAYFDAMGMGELIKSVEKVDELTVRFVLNRPEAPFLRDMAMPFASIYSAEYGDQLLAAGKQGQLNNQPIGTGPFVFKRYAKDAQVRYTANPDYYAGKPPIDNLVFAITLDPNVRMQKVRAGECQVSLYPKPEDVPRLKQDPNLAVDEIDALLTTYIAINTQHKPLDDPRVRQAINLALDKKAMLDAVFGPGAASPAVGPYPPTLLGYNHSIQDWPHDPERARALLKEAGAENLRITLFIRNGTSPTIPNPALAAQMLQADLAKAGIQLTIRSLEWGELLKRSKAGEHDLSLLGWAGDNGDPDNFLSPNLSCAAAESGENQARWCDKDFEALMRKAREVSDPAERAKLYEQAQVVFHEQAPWIPLAYPKLFNVRRNTVQGYVINPLSNNNFATTSVKP.

The first 25 residues, 1–25 (MLHPLLRHLPLALALALCAAGAAQA), serve as a signal peptide directing secretion.

This sequence belongs to the bacterial solute-binding protein 5 family. As to quaternary structure, the complex is composed of two ATP-binding proteins (DppD and DppF), two transmembrane proteins (DppB and DppC) and a solute-binding protein (DppA4). Five orthologous SBPs (DppA1-A5) are present in P.aeruginosa, which increases the substrate specificity of the DppBCDF transporter.

Part of the ABC transporter DppABCDF involved in the uptake of various di/tripeptides. Prefers dipeptides with acidic residues at the C-terminal end. Efficiently uses tripeptides. This is Di/tripeptide-binding protein 4 from Pseudomonas aeruginosa (strain UCBPP-PA14).